A 449-amino-acid polypeptide reads, in one-letter code: Mannan endo-1,6-alpha-mannosidase DCW1 (449 aa).

The signal sequence occupies residues 1 to 21; the sequence is MLVNKVIGLLGVLFATRFTNA. Asparagine 34, asparagine 84, asparagine 109, asparagine 133, asparagine 203, asparagine 225, asparagine 240, asparagine 265, asparagine 281, asparagine 337, asparagine 362, and asparagine 420 each carry an N-linked (GlcNAc...) asparagine glycan. Glycine 428 carries the GPI-anchor amidated glycine lipid modification. Positions 429 to 449 are cleaved as a propeptide — removed in mature form; the sequence is AGIITAVIGISIVACALWLVF.

It belongs to the glycosyl hydrolase 76 family.

Its subcellular location is the cell membrane. It catalyses the reaction Random hydrolysis of (1-&gt;6)-alpha-D-mannosidic linkages in unbranched (1-&gt;6)-mannans.. In terms of biological role, required for normal synthesis of the cell wall. The polypeptide is Mannan endo-1,6-alpha-mannosidase DCW1 (DCW1) (Saccharomyces cerevisiae (strain ATCC 204508 / S288c) (Baker's yeast)).